We begin with the raw amino-acid sequence, 333 residues long: UPF0285 protein MTH_1441 (333 aa).

It belongs to the UPF0285 family.

The chain is UPF0285 protein MTH_1441 from Methanothermobacter thermautotrophicus (strain ATCC 29096 / DSM 1053 / JCM 10044 / NBRC 100330 / Delta H) (Methanobacterium thermoautotrophicum).